Consider the following 1146-residue polypeptide: Transcription-repair-coupling factor (1146 aa).

A Helicase ATP-binding domain is found at 617–778 (DMCQPKAMDR…MNGIRDLSII (162 aa)). An ATP-binding site is contributed by 630 to 637 (GDVGFGKT). A DEEH box motif is present at residues 731-734 (DEEH). Positions 800–953 (VREAILREIL…GFILATHDLE (154 aa)) constitute a Helicase C-terminal domain.

It in the N-terminal section; belongs to the UvrB family. This sequence in the C-terminal section; belongs to the helicase family. RecG subfamily.

It localises to the cytoplasm. Couples transcription and DNA repair by recognizing RNA polymerase (RNAP) stalled at DNA lesions. Mediates ATP-dependent release of RNAP and its truncated transcript from the DNA, and recruitment of nucleotide excision repair machinery to the damaged site. This chain is Transcription-repair-coupling factor, found in Haemophilus influenzae (strain ATCC 51907 / DSM 11121 / KW20 / Rd).